Reading from the N-terminus, the 310-residue chain is Aspartate carbamoyltransferase catalytic subunit (310 aa).

The carbamoyl phosphate site is built by Arg-58 and Thr-59. Residue Lys-87 coordinates L-aspartate. 3 residues coordinate carbamoyl phosphate: Arg-108, His-136, and Gln-139. Positions 169 and 229 each coordinate L-aspartate. Carbamoyl phosphate-binding residues include Leu-268 and Pro-269.

It belongs to the aspartate/ornithine carbamoyltransferase superfamily. ATCase family. In terms of assembly, heterododecamer (2C3:3R2) of six catalytic PyrB chains organized as two trimers (C3), and six regulatory PyrI chains organized as three dimers (R2).

It catalyses the reaction carbamoyl phosphate + L-aspartate = N-carbamoyl-L-aspartate + phosphate + H(+). Its pathway is pyrimidine metabolism; UMP biosynthesis via de novo pathway; (S)-dihydroorotate from bicarbonate: step 2/3. In terms of biological role, catalyzes the condensation of carbamoyl phosphate and aspartate to form carbamoyl aspartate and inorganic phosphate, the committed step in the de novo pyrimidine nucleotide biosynthesis pathway. This Leptospira biflexa serovar Patoc (strain Patoc 1 / Ames) protein is Aspartate carbamoyltransferase catalytic subunit.